Consider the following 189-residue polypeptide: Putative nucleotidase BC_3386 (189 aa).

It belongs to the 5'(3')-deoxyribonucleotidase family.

The protein is Putative nucleotidase BC_3386 of Bacillus cereus (strain ATCC 14579 / DSM 31 / CCUG 7414 / JCM 2152 / NBRC 15305 / NCIMB 9373 / NCTC 2599 / NRRL B-3711).